A 103-amino-acid chain; its full sequence is Large ribosomal subunit protein bL21 (103 aa).

It belongs to the bacterial ribosomal protein bL21 family. As to quaternary structure, part of the 50S ribosomal subunit. Contacts protein L20.

This protein binds to 23S rRNA in the presence of protein L20. The polypeptide is Large ribosomal subunit protein bL21 (Mycolicibacterium smegmatis (strain ATCC 700084 / mc(2)155) (Mycobacterium smegmatis)).